The sequence spans 185 residues: ADP-ribosylation factor-like protein 2 (185 aa).

A lipid anchor (N-myristoyl glycine) is attached at Gly-2. GTP-binding positions include 23 to 30, 66 to 70, and 125 to 128; these read GLDNSGKT, DVGGQ, and NKQD.

This sequence belongs to the small GTPase superfamily. Arf family. In terms of assembly, supercomplex made of cofactors A to E. Cofactors A and D function by capturing and stabilizing tubulin in a quasi-native conformation. Cofactor E binds to the cofactor D-tubulin complex; interaction with cofactor C then causes the release of tubulin polypeptides that are committed to the native state. As to expression, expressed in seedlings, leaves, roots and inflorescences.

The protein localises to the cytoplasm. Has a role in the cofactor-dependent pathway of microtubule biogenesis. Not essential for cell viability. May play a regulatory role in sequestring TFCD. This Arabidopsis thaliana (Mouse-ear cress) protein is ADP-ribosylation factor-like protein 2 (ARL2).